A 215-amino-acid polypeptide reads, in one-letter code: Calcium-binding protein 7 (215 aa).

Topologically, residues 1–188 are cytoplasmic; it reads MPFHPVTAAL…QIRQTCVRKS (188 aa). EF-hand domains follow at residues 33–68 and 69–104; these read DELE…LGYM and PNEV…KLST. Ca(2+) contacts are provided by Asp46, Asp48, Asn50, Glu57, Asp82, Asp84, Asp86, Gln88, and Glu93. Residues 189–209 form a helical; Anchor for type IV membrane protein membrane-spanning segment; the sequence is LICAFAIAFIISVMLIAANQV. Topologically, residues 210–215 are extracellular; the sequence is LRSGMK.

Interacts with PI4KB. This binding competes with FREQ/NCS1 binding in a calcium-dependent manner.

The protein localises to the golgi apparatus. It localises to the trans-Golgi network membrane. Its subcellular location is the cytoplasm. It is found in the perinuclear region. The protein resides in the cell membrane. In terms of biological role, negatively regulates Golgi-to-plasma membrane trafficking by interacting with PI4KB and inhibiting its activity. This Homo sapiens (Human) protein is Calcium-binding protein 7 (CABP7).